Here is a 438-residue protein sequence, read N- to C-terminus: UDP-N-acetylmuramoylalanine--D-glutamate ligase (438 aa).

An ATP-binding site is contributed by 112–118; that stretch reads GSNGKST.

Belongs to the MurCDEF family.

The protein localises to the cytoplasm. It carries out the reaction UDP-N-acetyl-alpha-D-muramoyl-L-alanine + D-glutamate + ATP = UDP-N-acetyl-alpha-D-muramoyl-L-alanyl-D-glutamate + ADP + phosphate + H(+). Its pathway is cell wall biogenesis; peptidoglycan biosynthesis. Functionally, cell wall formation. Catalyzes the addition of glutamate to the nucleotide precursor UDP-N-acetylmuramoyl-L-alanine (UMA). In Shigella sonnei (strain Ss046), this protein is UDP-N-acetylmuramoylalanine--D-glutamate ligase.